We begin with the raw amino-acid sequence, 487 residues long: GTPase Der (487 aa).

The disordered stretch occupies residues 1–20 (MAKAVRKSNSEETVPIKAPR). EngA-type G domains follow at residues 28-197 (PVVS…SSKP) and 225-401 (FRLA…SRSR). GTP contacts are provided by residues 34–41 (GRQNVGKS), 83–87 (DTPGL), 149–152 (NKAD), 231–238 (GKPNSGKS), 278–282 (DTAGI), and 343–346 (NKWD). One can recognise a KH-like domain in the interval 402–486 (RKVSTSELNK…PVRLEFRSDR (85 aa)).

Belongs to the TRAFAC class TrmE-Era-EngA-EngB-Septin-like GTPase superfamily. EngA (Der) GTPase family. Associates with the 50S ribosomal subunit.

In terms of biological role, GTPase that plays an essential role in the late steps of ribosome biogenesis. The polypeptide is GTPase Der (Leptospira borgpetersenii serovar Hardjo-bovis (strain L550)).